The chain runs to 76 residues: Conotoxin TsMLCL-03 (76 aa).

Positions 1–19 (MLCLPVFIILLLLASPAAP) are cleaved as a signal peptide. Residues 20 to 44 (NPLERRIQSDLIRTALEDADMKTPK) constitute a propeptide that is removed on maturation.

It belongs to the conotoxin T superfamily. In terms of processing, contains 2 disulfide bonds that can be either 'C1-C3, C2-C4' or 'C1-C4, C2-C3', since these disulfide connectivities have been observed for conotoxins with cysteine framework V (for examples, see AC P0DQQ7 and AC P81755). Expressed by the venom duct.

Its subcellular location is the secreted. This is Conotoxin TsMLCL-03 from Conus tessulatus (Tessellate cone).